Consider the following 1031-residue polypeptide: MSEVIIDFSTFENRLLALRDRFPSFDGSPSSLVFILGSADEENPYQKTTILHNWLLGYEFPTTLIAVFKEGCVVITSAAKTRYLEEGVAQMNKKLENTFKIELWQSSKEPGHNLKLFEDLVERVREAGSAVGLATKDSYQGKFITEWKGVWDTAVEKHGLNGVDVSLGLSSLWAVKDEKEQAYLQVSSRGSDKFMNLLSDELVRAVDEEIKITDAKLSDNVENEIDKSRFLKKLSPELTPLCPKGEKFDVNYLDWAYSPIIQSGPKYDLRVSARSSETQLDGNGCILASCGIRYKNYCSNISRTFLIDPSDEMTDNYDFLLLLQEEIINNLLRVGATPKQIYDGAVNYINSKKPELSAGFTKNVGSLMGLEFRDSQFVLNNKNDYRKVENGDCFNISLGFNNLKDSKTGASYALQLADTVQLTSGGPKVLTNYTKSRSQISFYFNNEDDGTTKVKSEESKTASIPTKPDPKSKILRSKLRGESRAEDDEKEQIRKENQRKLHEKLQREGLLRFTDTDAADKDQKPVVHFKKYESYVRETQIPNTVRDLRIHVDWKNQTFILPIYGRPVPFHINSYKNGSKNEEGEYTYIRLNFHSPGTGGVSKKTEELPYEDSPDHQFVRSLTLRSKDGDRMADIFKQITELKKESTKREQERKVLADVVEQAKLVENRTGRTKRLDQIFVRPSPDTKRVPGTVFIHENGIRYQSPLRTDSRIDILFSNVKNLFFQPCKGELIVIIHIHLKNPILMGKKKIQDVQFYREASDMAVDETGNGRRNQMKFRRYGDEDELEQEQEERRKRAALDKEFRYFAEAIAEASNGLVEVDHPFRDLGFQGVPSRSAVFCMPTRDCLIQLVEPPFLVVNLSEVEICILERVQFGLKNFDMVFVYKDFTKPVTHINTIPIEQLEFIKSWLTDVDIPYTVSTINLNWATIMKSLQDDPHQFFLDGGWSFLATGSDDEMSGTSEEEVSEYEVSDEDPSDEEVDSEDDYSEGDNEEFSDEGSEDFSGEESEEGEDWDELEKKAAKADRGNRFAD.

2 stretches are compositionally biased toward basic and acidic residues: residues 450 to 460 and 491 to 501; these read GTTKVKSEESK and EQIRKENQRKL. Disordered regions lie at residues 450-501 and 952-1031; these read GTTK…QRKL and GSDD…RFAD. Residues 478-499 are a coiled coil; sequence KLRGESRAEDDEKEQIRKENQR. The segment covering 953–1015 has biased composition (acidic residues); the sequence is SDDEMSGTSE…ESEEGEDWDE (63 aa). A compositionally biased stretch (basic and acidic residues) spans 1016–1031; sequence LEKKAAKADRGNRFAD.

Belongs to the peptidase M24 family. SPT16 subfamily. Forms a stable heterodimer with POB3. The SPT16-POB3 dimer weakly associates with multiple molecules of NHP6 to form the FACT complex.

The protein localises to the nucleus. The protein resides in the chromosome. In terms of biological role, component of the FACT complex, a general chromatin factor that acts to reorganize nucleosomes. The FACT complex is involved in multiple processes that require DNA as a template such as mRNA elongation, DNA replication and DNA repair. During transcription elongation the FACT complex acts as a histone chaperone that both destabilizes and restores nucleosomal structure. It facilitates the passage of RNA polymerase II and transcription by promoting the dissociation of one histone H2A-H2B dimer from the nucleosome, then subsequently promotes the reestablishment of the nucleosome following the passage of RNA polymerase II. The protein is FACT complex subunit SPT16 (SPT16) of Eremothecium gossypii (strain ATCC 10895 / CBS 109.51 / FGSC 9923 / NRRL Y-1056) (Yeast).